A 374-amino-acid chain; its full sequence is Anhydro-N-acetylmuramic acid kinase (374 aa).

Residue 12 to 19 (GTSLDGVD) participates in ATP binding.

It belongs to the anhydro-N-acetylmuramic acid kinase family.

It catalyses the reaction 1,6-anhydro-N-acetyl-beta-muramate + ATP + H2O = N-acetyl-D-muramate 6-phosphate + ADP + H(+). It functions in the pathway amino-sugar metabolism; 1,6-anhydro-N-acetylmuramate degradation. It participates in cell wall biogenesis; peptidoglycan recycling. In terms of biological role, catalyzes the specific phosphorylation of 1,6-anhydro-N-acetylmuramic acid (anhMurNAc) with the simultaneous cleavage of the 1,6-anhydro ring, generating MurNAc-6-P. Is required for the utilization of anhMurNAc either imported from the medium or derived from its own cell wall murein, and thus plays a role in cell wall recycling. In Salmonella arizonae (strain ATCC BAA-731 / CDC346-86 / RSK2980), this protein is Anhydro-N-acetylmuramic acid kinase.